We begin with the raw amino-acid sequence, 146 residues long: Linear conopeptide (146 aa).

Residues 1–19 (MLRLIIAAAVLVSACLAYP) form the signal peptide. The propeptide occupies 20–34 (QRREGAPADAANLQS). At methionine 40 the chain carries Methionine sulfoxide; partial; in Cn2. 2 consecutive propeptides follow at residues 58 to 80 (FLPFNPNLQMGYKRDFDENLEKR) and 104 to 146 (FLHN…DKEQ). The segment at 107-146 (NEKGDKHPFANVDSADTDLGQFEPSAENKNGEFRFFDKEQ) is disordered. Residues 135-146 (KNGEFRFFDKEQ) show a composition bias toward basic and acidic residues.

In terms of tissue distribution, expressed by the venom duct.

The protein localises to the secreted. The sequence is that of Linear conopeptide from Conus consors (Singed cone).